A 160-amino-acid polypeptide reads, in one-letter code: Phosphopantetheine adenylyltransferase (160 aa).

S9 serves as a coordination point for substrate. ATP is bound by residues 9 to 10 (SF) and H17. Residues K41, I73, and K87 each contribute to the substrate site. Residues 88–90 (GLR), E98, and 122–128 (YSFVSSS) contribute to the ATP site.

This sequence belongs to the bacterial CoaD family. In terms of assembly, homohexamer. Requires Mg(2+) as cofactor.

The protein localises to the cytoplasm. The enzyme catalyses (R)-4'-phosphopantetheine + ATP + H(+) = 3'-dephospho-CoA + diphosphate. It participates in cofactor biosynthesis; coenzyme A biosynthesis; CoA from (R)-pantothenate: step 4/5. Its function is as follows. Reversibly transfers an adenylyl group from ATP to 4'-phosphopantetheine, yielding dephospho-CoA (dPCoA) and pyrophosphate. The protein is Phosphopantetheine adenylyltransferase of Mycolicibacterium vanbaalenii (strain DSM 7251 / JCM 13017 / BCRC 16820 / KCTC 9966 / NRRL B-24157 / PYR-1) (Mycobacterium vanbaalenii).